The chain runs to 587 residues: Phosphatidylinositol-3-phosphatase SAC1 (587 aa).

At 1–520 (MAATAYEHLK…SPLSVPRDWK (520 aa)) the chain is on the cytoplasmic side. Residues 122–451 (LNHVLSTDGF…ANACAKQYAG (330 aa)) enclose the SAC domain. The segment at 452–587 (TGALKTDFTR…PRLVQKEKID (136 aa)) is essential for phosphatidylinositol-4-phosphate phosphatase activity. An N6-acetyllysine modification is found at lysine 456. A helical transmembrane segment spans residues 521-541 (FLALPIIMVVAFSMCIICLLM). At 542–548 (AGDTWTE) the chain is on the lumenal side. A helical transmembrane segment spans residues 549–569 (TLAYVLFWGVASIGTFFIILY). The Cytoplasmic segment spans residues 570 to 587 (NGKDFVDAPRLVQKEKID).

Interacts with TMEM39A. Interacts with SEC23A and SEC24A; this interaction is reduced in the absence of TMEM39A. Interacts with PLEKHA3 and VAPA and/or VAPB to form a ternary complex. In terms of tissue distribution, detected in spleen, lung, liver, skeletal muscle, kidney, testis and in cerebellar Purkinje cells (at protein level). Ubiquitous. Highly expressed in brain, spleen, liver and kidney.

It localises to the endoplasmic reticulum membrane. Its subcellular location is the golgi apparatus membrane. It catalyses the reaction a 1,2-diacyl-sn-glycero-3-phospho-(1D-myo-inositol-3-phosphate) + H2O = a 1,2-diacyl-sn-glycero-3-phospho-(1D-myo-inositol) + phosphate. It carries out the reaction a 1,2-diacyl-sn-glycero-3-phospho-(1D-myo-inositol 4-phosphate) + H2O = a 1,2-diacyl-sn-glycero-3-phospho-(1D-myo-inositol) + phosphate. In terms of biological role, phosphoinositide phosphatase which catalyzes the hydrolysis of phosphatidylinositol 4-phosphate (PtdIns(4)P), phosphatidylinositol 3-phosphate (PtdIns(3)P) and has low activity towards phosphatidylinositol-3,5-bisphosphate (PtdIns(3,5)P2). Shows a very robust PtdIns(4)P phosphatase activity when it binds PtdIns(4)P in a 'cis' configuration in the cellular environment, with much less activity seen when it binds PtdIns(4)P in 'trans' configuration. PtdIns(4)P phosphatase activity (when it binds PtdIns(4)P in 'trans' configuration) is enhanced in the presence of PLEKHA3. The polypeptide is Phosphatidylinositol-3-phosphatase SAC1 (Sacm1l) (Rattus norvegicus (Rat)).